A 325-amino-acid polypeptide reads, in one-letter code: Chain length determinant protein (325 aa).

The Cytoplasmic segment spans residues 1–31 (MRVENNNVSGQNHDPEQIDLIDLLVQLWRGK). A helical transmembrane segment spans residues 32–52 (MTIIISVIVAIALAIGYLAVA). The Periplasmic segment spans residues 53-294 (KEKWTSTAIV…LPIRRDSPKK (242 aa)). Residues 295-315 (AITLILAVLLGGMVGAGIVLG) form a helical membrane-spanning segment. Over 316–325 (RNALRNYNAK) the chain is Cytoplasmic.

The protein belongs to the WzzB/Cld/Rol family.

The protein localises to the cell inner membrane. It functions in the pathway bacterial outer membrane biogenesis; lipopolysaccharide biosynthesis. Functionally, confers a modal distribution of chain length on the O-antigen component of lipopolysaccharide (LPS). Gives rise to a reduced number of short chain molecules and increases in numbers of longer molecules. In Shigella dysenteriae, this protein is Chain length determinant protein (wzzB).